The primary structure comprises 1269 residues: Protein flightless-1 homolog (1269 aa).

Met-1 bears the N-acetylmethionine mark. The interaction with LRRFIP1 and LRRFIP2 stretch occupies residues Met-1 to Lys-427. LRR repeat units lie at residues Leu-7–Met-32, Thr-33–Leu-55, Gln-56–Leu-78, Ser-80–Leu-103, Asp-104–Ala-126, Lys-127–Asn-149, Leu-150–Leu-173, His-175–Ala-196, Met-197–Leu-222, Ser-223–Leu-245, Ser-247–Trp-268, Val-269–Leu-291, Lys-293–Leu-316, Asn-318–Cys-339, Pro-340–Thr-363, and Ile-365–Arg-385. At Lys-21 the chain carries N6-acetyllysine. Ser-406 is subject to Phosphoserine. Ser-436 is modified (phosphoserine; by SGK3). The disordered stretch occupies residues Val-452 to Val-473. The span at Ala-453–Asp-465 shows a compositional bias: basic and acidic residues. The interval Val-495–Glu-827 is interaction with ACTL6A. Gelsolin-like repeat units follow at residues Phe-509–Leu-591, Asn-629–Trp-703, and Glu-758–Phe-831. A Phosphothreonine; by SGK3 modification is found at Thr-818. Residues Ser-856 and Ser-860 each carry the phosphoserine modification. The interval Lys-951–Gln-975 is disordered. The span at Lys-952 to Glu-965 shows a compositional bias: basic and acidic residues. Over residues Glu-966–Gln-975 the composition is skewed to acidic residues. 2 Gelsolin-like repeats span residues Thr-1075–Phe-1143 and Lys-1181–Phe-1254.

Interacts with actin, ACTL6A, NCOA2 and CARM1. Interacts with LRRFIP1, LRRFIP2 and MYD88. Upon LPS stimulation, LRRFIP2 competes for MYD88-binding. LRRFIP1 constitutively blocks the interaction with MyD88, even in the absence of LPS. Interacts with the nuclear receptors ESR1 and THRB. Interacts with SGK3. Interacts (via the gelsolin-like region) with TMOD1. Interacts with (via the gelsolin-like region) TMOD3. Interacts with LMOD2, VCL, GSN and DES. Strongest expression in skeletal muscle with high expression also in the heart and lung.

It is found in the nucleus. The protein resides in the cytoplasm. It localises to the cytoskeleton. Its subcellular location is the microtubule organizing center. The protein localises to the centrosome. It is found in the cell projection. The protein resides in the podosome. It localises to the cell junction. Its subcellular location is the focal adhesion. In terms of biological role, is a regulator of actin polymerization, required for proper myofibril organization and regulation of the length of sarcomeric thin filaments. It also plays a role in the assembly of cardiomyocyte cell adhesion complexes. Regulates cytoskeletal rearrangements involved in cytokinesis and cell migration, by inhibiting Rac1-dependent paxillin phosphorylation. May play a role as coactivator in transcriptional activation by hormone-activated nuclear receptors (NR) and acts in cooperation with NCOA2 and CARM1. Involved in estrogen hormone signaling. The sequence is that of Protein flightless-1 homolog (FLII) from Homo sapiens (Human).